The chain runs to 244 residues: uncharacterized protein (244 aa).

The next 6 membrane-spanning stretches (helical) occupy residues 22 to 42 (IMLQ…LLSF), 63 to 83 (FIFS…WGLT), 110 to 130 (VILL…EAFA), 140 to 160 (IMSL…NLTV), 186 to 206 (GVLF…IFQL), and 213 to 233 (AVFD…MLVV).

It localises to the cell membrane. This is an uncharacterized protein from Haemophilus influenzae (strain ATCC 51907 / DSM 11121 / KW20 / Rd).